The sequence spans 179 residues: Large ribosomal subunit protein uL5 (179 aa).

The protein belongs to the universal ribosomal protein uL5 family. Part of the 50S ribosomal subunit; part of the 5S rRNA/L5/L18/L25 subcomplex. Contacts the 5S rRNA and the P site tRNA. Forms a bridge to the 30S subunit in the 70S ribosome.

Its function is as follows. This is one of the proteins that bind and probably mediate the attachment of the 5S RNA into the large ribosomal subunit, where it forms part of the central protuberance. In the 70S ribosome it contacts protein S13 of the 30S subunit (bridge B1b), connecting the 2 subunits; this bridge is implicated in subunit movement. Contacts the P site tRNA; the 5S rRNA and some of its associated proteins might help stabilize positioning of ribosome-bound tRNAs. This Mannheimia succiniciproducens (strain KCTC 0769BP / MBEL55E) protein is Large ribosomal subunit protein uL5.